The following is a 330-amino-acid chain: Aspartate--ammonia ligase (330 aa).

This sequence belongs to the class-II aminoacyl-tRNA synthetase family. AsnA subfamily.

Its subcellular location is the cytoplasm. It carries out the reaction L-aspartate + NH4(+) + ATP = L-asparagine + AMP + diphosphate + H(+). The protein operates within amino-acid biosynthesis; L-asparagine biosynthesis; L-asparagine from L-aspartate (ammonia route): step 1/1. The chain is Aspartate--ammonia ligase from Haemophilus influenzae (strain PittEE).